The primary structure comprises 456 residues: Asparagine--tRNA ligase (456 aa).

This sequence belongs to the class-II aminoacyl-tRNA synthetase family. As to quaternary structure, homodimer.

It localises to the cytoplasm. It catalyses the reaction tRNA(Asn) + L-asparagine + ATP = L-asparaginyl-tRNA(Asn) + AMP + diphosphate + H(+). In Mycoplasma genitalium (strain ATCC 33530 / DSM 19775 / NCTC 10195 / G37) (Mycoplasmoides genitalium), this protein is Asparagine--tRNA ligase.